A 476-amino-acid chain; its full sequence is Zinc metalloproteinase/disintegrin (476 aa).

Positions 1 to 20 (MIQVLLVTICLAAFPYQGSS) are cleaved as a signal peptide. Positions 21-192 (IILESGNVND…ASQSNLTPEQ (172 aa)) are excised as a propeptide. Residue Gln193 is modified to Pyrrolidone carboxylic acid. The Peptidase M12B domain maps to 198 to 393 (RYIELAVVAD…HNPQCILNKP (196 aa)). Ca(2+)-binding residues include Glu201 and Asp285. Cystine bridges form between Cys309–Cys388, Cys348–Cys372, and Cys350–Cys355. His334 serves as a coordination point for Zn(2+). Glu335 is an active-site residue. Zn(2+) is bound by residues His338 and His344. Residues Cys388 and Asn391 each coordinate Ca(2+). A propeptide spanning residues 394 to 403 (LTTVSGNELL) is cleaved from the precursor. The region spanning 395–476 (TTVSGNELLE…ADCPRNRFHA (82 aa)) is the Disintegrin domain. 6 disulfide bridges follow: Cys409–Cys424, Cys411–Cys419, Cys418–Cys441, Cys432–Cys438, Cys437–Cys462, and Cys450–Cys469. Residues 454-456 (RGD) carry the Cell attachment site motif.

It belongs to the venom metalloproteinase (M12B) family. P-II subfamily. P-IIa sub-subfamily. As to quaternary structure, monomer (metalloprotease). Zn(2+) is required as a cofactor. In terms of processing, the N-terminus is blocked. Post-translationally, not glycosylated. Expressed by the venom gland.

The protein resides in the secreted. Its activity is regulated as follows. Inhibited by EDTA, and 1,10-phenanthroline, but not by PMSF. Non-hemorrhagic proteinase that activates prothrombin (F2) calcium-independently. Activates factor X (F10) and hydrolyzes the Aalpha-chain and more slowly the Bbeta-chain of fibrin and fibrinogen without affecting the gamma chain. It induces neither detachment nor apoptosis of human endothelial cells and is also not able to trigger an endothelial pro-inflammatory cell response. Nitric oxide and prostacyclin levels released by endothelial cells are significantly increased after treatment with insularinase A. Its function is as follows. Inhibits ADP-induced platelet aggregation (IC(50)=0.8 uM for native protein). Interestingly, inhibits the adhesion of HUVECs to immobilized fibrinogen at very low concentrations (IC(50)=36 nM). This chain is Zinc metalloproteinase/disintegrin, found in Bothrops insularis (Golden lancehead).